A 178-amino-acid chain; its full sequence is MNKISKVVVVFIALLTFLALMMQSQEVKTPGLLIQFENETSEAEVKAILENYDIPVNYTIDYNSNIGRGMYYIEVDEDKIYELRKDENWTSVVEIKKGNYNIIMLSEEFVPDENVLAMLEKNNLQLKKAVVCYIQFGDGSAPWVVGENCILERDAIRIKNELETNEKVLIVGLDDIVG.

This sequence belongs to the UPF0228 family.

The sequence is that of UPF0228 protein MA_4223 from Methanosarcina acetivorans (strain ATCC 35395 / DSM 2834 / JCM 12185 / C2A).